The sequence spans 444 residues: 3-phosphoshikimate 1-carboxyvinyltransferase (444 aa).

3-phosphoshikimate-binding residues include Lys-32, Ser-33, and Arg-37. A phosphoenolpyruvate-binding site is contributed by Lys-32. Phosphoenolpyruvate contacts are provided by Gly-105 and Arg-133. 4 residues coordinate 3-phosphoshikimate: Ser-178, Gln-180, Asp-326, and Lys-353. A phosphoenolpyruvate-binding site is contributed by Gln-180. The active-site Proton acceptor is Asp-326. The phosphoenolpyruvate site is built by Arg-357 and Arg-398.

It belongs to the EPSP synthase family. Monomer.

Its subcellular location is the cytoplasm. The enzyme catalyses 3-phosphoshikimate + phosphoenolpyruvate = 5-O-(1-carboxyvinyl)-3-phosphoshikimate + phosphate. It functions in the pathway metabolic intermediate biosynthesis; chorismate biosynthesis; chorismate from D-erythrose 4-phosphate and phosphoenolpyruvate: step 6/7. Catalyzes the transfer of the enolpyruvyl moiety of phosphoenolpyruvate (PEP) to the 5-hydroxyl of shikimate-3-phosphate (S3P) to produce enolpyruvyl shikimate-3-phosphate and inorganic phosphate. The polypeptide is 3-phosphoshikimate 1-carboxyvinyltransferase (Nitrosococcus oceani (strain ATCC 19707 / BCRC 17464 / JCM 30415 / NCIMB 11848 / C-107)).